The chain runs to 416 residues: UDP-N-acetylglucosamine 1-carboxyvinyltransferase (416 aa).

22 to 23 (KN) provides a ligand contact to phosphoenolpyruvate. Arg-91 provides a ligand contact to UDP-N-acetyl-alpha-D-glucosamine. The active-site Proton donor is Cys-115. 2-(S-cysteinyl)pyruvic acid O-phosphothioketal is present on Cys-115. UDP-N-acetyl-alpha-D-glucosamine contacts are provided by residues 120 to 124 (RPIDL), Asp-303, and Ile-325.

The protein belongs to the EPSP synthase family. MurA subfamily.

Its subcellular location is the cytoplasm. The catalysed reaction is phosphoenolpyruvate + UDP-N-acetyl-alpha-D-glucosamine = UDP-N-acetyl-3-O-(1-carboxyvinyl)-alpha-D-glucosamine + phosphate. It participates in cell wall biogenesis; peptidoglycan biosynthesis. Functionally, cell wall formation. Adds enolpyruvyl to UDP-N-acetylglucosamine. The protein is UDP-N-acetylglucosamine 1-carboxyvinyltransferase of Lawsonia intracellularis (strain PHE/MN1-00).